A 248-amino-acid chain; its full sequence is Myelin protein P0 (248 aa).

Positions 1–28 (MAPGAPSSSPSPILAALLFSSLVLSPVQ) are cleaved as a signal peptide. Topologically, residues 29–155 (AIVVYTDKEV…VFEKVPTRYG (127 aa)) are extracellular. Residues 30–143 (IVVYTDKEVH…DIVGKTSQVT (114 aa)) enclose the Ig-like V-type domain. Cys-50 and Cys-127 are disulfide-bonded. N-linked (GlcNAc...) (complex) asparagine glycosylation is present at Asn-122. Residues 156–176 (VVLGAVIGGVLGVVLLALLLF) traverse the membrane as a helical segment. Topologically, residues 177–248 (YLIRYCWLRR…GLGESRKDKK (72 aa)) are cytoplasmic. At Ser-210 the chain carries Phosphoserine; by PKC. The disordered stretch occupies residues 224-248 (DHSRSTKAASEKKTKGLGESRKDKK). A phosphoserine mark is found at Ser-226 and Ser-228. Phosphoserine; by PKC is present on residues Ser-233 and Ser-243.

Belongs to the myelin P0 protein family. Homodimer and homotetramer. In terms of processing, N-glycosylated; contains sulfate-substituted glycan. As to expression, found only in peripheral nervous system Schwann cells.

Its subcellular location is the cell membrane. Is an adhesion molecule necessary for normal myelination in the peripheral nervous system. It mediates adhesion between adjacent myelin wraps and ultimately drives myelin compaction. The polypeptide is Myelin protein P0 (MPZ) (Bos taurus (Bovine)).